The chain runs to 508 residues: 2'-5'-oligoadenylate synthase-like protein 2 (508 aa).

S69 contributes to the ATP binding site. 3 residues coordinate Mg(2+): D81, D83, and D154. Residues R213 and K216 each coordinate ATP. One can recognise a Ubiquitin-like domain in the interval 435 to 473 (ILVFVKYPGGQSKPFTIDPDDTILDLKEKIEDAGGPCAE).

This sequence belongs to the 2-5A synthase family. Mg(2+) is required as a cofactor. In terms of tissue distribution, strongly expressed in spleen dendritic cells, whereas, in bone marrow-derived dendritic cells, the amount increases during the maturation process. Expressed in many organs, the highest levels being in thymus, lung, and bone marrow.

It carries out the reaction 3 ATP = 5'-triphosphoadenylyl-(2'-&gt;5')-adenylyl-(2'-&gt;5')-adenosine + 2 diphosphate. Produced as a latent enzyme which is activated by dsRNA generated during the course of viral infection. The dsRNA activator must be at least 15 nucleotides long, and no modification of the 2'-hydroxyl group is tolerated. ssRNA or dsDNA do not act as activators. In terms of biological role, interferon-induced, dsRNA-activated antiviral enzyme which plays a critical role in cellular innate antiviral response. Synthesizes oligomers of 2'-5'-oligoadenylates (2-5A) from ATP which then bind to the inactive monomeric form of ribonuclease L (RNase L) leading to its dimerization and subsequent activation. Activation of RNase L leads to degradation of cellular as well as viral RNA, resulting in the inhibition of protein synthesis, thus terminating viral replication. Can mediate the antiviral effect via the classical RNase L-dependent pathway or an alternative antiviral pathway independent of RNase L. This Mus musculus (Mouse) protein is 2'-5'-oligoadenylate synthase-like protein 2 (Oasl2).